The primary structure comprises 121 residues: UPF0102 protein BF0706 (121 aa).

This sequence belongs to the UPF0102 family.

The polypeptide is UPF0102 protein BF0706 (Bacteroides fragilis (strain YCH46)).